Here is a 192-residue protein sequence, read N- to C-terminus: MASRKTISFVTGNKNKLKEVQQFLHGSSSINITSVPLDLPEYQGEPDDVSKQKCAEASKQLSGPVLIEDTCLCFNAMGGLPGPYVKWFLEKLGPEGIYKMLDGWEDKSGYALCTFAYSNGLQGDDVLLFRGKCEGTIVPPRGPRTFGWDPCFQPNGFNETYAEMSSELKNSISHRGKALEALSEYFKEKNCD.

ITP is bound at residue 11–16; sequence TGNKNK. Glu41 is a binding site for Mg(2+). ITP-binding positions include Lys53, 69 to 70, Lys86, 146 to 149, Lys169, and 174 to 175; these read DT, FGWD, and HR.

Belongs to the HAM1 NTPase family. As to quaternary structure, homodimer. Mg(2+) is required as a cofactor. It depends on Mn(2+) as a cofactor.

It is found in the cytoplasm. It catalyses the reaction ITP + H2O = IMP + diphosphate + H(+). The enzyme catalyses dITP + H2O = dIMP + diphosphate + H(+). The catalysed reaction is XTP + H2O = XMP + diphosphate + H(+). Functionally, pyrophosphatase that hydrolyzes non-canonical purine nucleotides such as inosine triphosphate (ITP), deoxyinosine triphosphate (dITP) or xanthosine 5'-triphosphate (XTP) to their respective monophosphate derivatives. The enzyme does not distinguish between the deoxy- and ribose forms. Probably excludes non-canonical purines from RNA and DNA precursor pools, thus preventing their incorporation into RNA and DNA and avoiding chromosomal lesions. This is Inosine triphosphate pyrophosphatase from Ciona intestinalis (Transparent sea squirt).